Here is a 163-residue protein sequence, read N- to C-terminus: Nucleotide-binding protein CYB_0891 (163 aa).

Belongs to the YajQ family.

In terms of biological role, nucleotide-binding protein. This Synechococcus sp. (strain JA-2-3B'a(2-13)) (Cyanobacteria bacterium Yellowstone B-Prime) protein is Nucleotide-binding protein CYB_0891.